A 2646-amino-acid chain; its full sequence is Probable inactive serine/threonine-protein kinase roco10 (2646 aa).

7 disordered regions span residues 28 to 122, 138 to 168, 205 to 248, 281 to 457, 477 to 516, 605 to 656, and 882 to 907; these read LNYS…LSGG, NIPIPPVPTSPTSTPPNLQTNNNNKQDKDKD, PLFI…VSPS, QQQR…VKQA, MSKLVSQSKEQYKTPSSPYQQSTSSSISSGSGTISGHTSP, TSPN…PHQY, and QSSSSSSSSSISNSSSASSSSSSTPS. Residues 46–56 are compositionally biased toward polar residues; it reads PQQNLLENDTL. Composition is skewed to low complexity over residues 78–115, 147–161, and 215–228; these read IITTTTTTTTTTAMSPVATTTTSSPTISASPTYITSPS, SPTSTPPNLQTNNNN, and SRNNNGKRNSGGNK. A compositionally biased stretch (polar residues) spans 235 to 248; sequence KISSTSAAGDVSPS. 2 stretches are compositionally biased toward low complexity: residues 285–297 and 325–334; these read NGNNNNNNNNNNN and NNNNNNNNNN. Positions 335 to 345 are enriched in polar residues; the sequence is KQPQHPMNGNH. Over residues 346–394 the composition is skewed to low complexity; the sequence is SPSNGTSGSLSMSGSGIDNGGNNNNNSNTHGSSSNQSSGVTSPIIQSTS. Polar residues-rich tracts occupy residues 402 to 416 and 428 to 443; these read GLNSDSQMPLSSSPT and TSASAVSSQNRSPLMN. Composition is skewed to low complexity over residues 444–454, 491–516, 605–627, 634–651, and 883–907; these read STGVSSSSSGV, PSSPYQQSTSSSISSGSGTISGHTSP, TSPNLSSSLSSSSSSGSSGNSSP, QQQQQPQPTTTTTTNTNT, and SSSSSSSSSISNSSSASSSSSSTPS. A Rho-GAP domain is found at 585-807; sequence SSISPISTAA…MFIQQADILF (223 aa). LRR repeat units lie at residues 968 to 987, 989 to 1011, 1012 to 1033, 1040 to 1061, 1062 to 1083, 1085 to 1108, 1109 to 1131, 1132 to 1154, 1155 to 1176, 1178 to 1199, 1201 to 1222, 1224 to 1247, 1248 to 1270, 1271 to 1298, and 1303 to 1327; these read QKLDMFSLELESLPNEIKQL, DLQELNLNRNKFKLLPGDLARLT, SLRTICIEENNLTEISSEMADF, NLENVTLSSNRLVVLPPLYTWL, KLKTLNISNNYLTKLPIDIFQI, TLEVLRVSNNDLDDNGIPKICTST, KLRSLDLRKNHLTSIPEGIINLV, ELQVLTLADNQISHLTSDIQKLT, SLTELNLNGNQIQSLPPQLLLL, NLKKLYLDNNQLQSISSAIHRM, SLIELRLTNNNISRLPPGIVAL, KLNSLELTGNKPLKDNIPEKYIQK, GKEGIFSFFSETMRTNVPCYRTR, IIMLGDKSTGKSNLIKCLKKLPKSSFSS, and LPSLNNLNSNNSNNSGNSKTNILDI. One can recognise a Roc domain in the interval 1262 to 1474; sequence TNVPCYRTRI…RDIKQMIAKN (213 aa). 3 disordered regions span residues 1293–1317, 1651–1670, and 1957–2026; these read KSSFSSSSSNLPSLNNLNSNNSNNS, NNNNSNGNNVGRGRSGSRSM, and NNSS…KEKE. Low complexity predominate over residues 1651–1669; sequence NNNNSNGNNVGRGRSGSRS. Polar residues predominate over residues 1966–1975; it reads PIASSRSNPK. The segment covering 1983-1996 has biased composition (low complexity); it reads NLIQSNNNDNNNSL. A compositionally biased stretch (basic and acidic residues) spans 1997–2026; it reads SKKDLKELAKQNKEKEKEKEKDKDKEKEKE. The region spanning 2049-2342 is the Protein kinase domain; that stretch reads FSICHFIKEI…PSKIISQLYT (294 aa). Residues 2055-2063 and Lys-2094 contribute to the ATP site; that span reads IKEIDYREI. The 125-residue stretch at 2412–2536 folds into the RGS domain; the sequence is MVVLNNKQST…FTVPTTNKNG (125 aa).

Belongs to the protein kinase superfamily. TKL Ser/Thr protein kinase family. ROCO subfamily.

This chain is Probable inactive serine/threonine-protein kinase roco10 (roco10), found in Dictyostelium discoideum (Social amoeba).